A 316-amino-acid polypeptide reads, in one-letter code: D-alanine--D-alanine ligase (316 aa).

Residues 112-310 (KTALKAHGLP…FGKLCRWLVE (199 aa)) enclose the ATP-grasp domain. 139–189 (MATPYVVKPNNEGSSVGVYLVNEAANGPPHLSDDMPDEVMVETYAPGRELT) is an ATP binding site. Positions 261, 277, and 279 each coordinate Mg(2+).

Belongs to the D-alanine--D-alanine ligase family. It depends on Mg(2+) as a cofactor. Mn(2+) serves as cofactor.

The protein localises to the cytoplasm. The catalysed reaction is 2 D-alanine + ATP = D-alanyl-D-alanine + ADP + phosphate + H(+). It participates in cell wall biogenesis; peptidoglycan biosynthesis. Its function is as follows. Cell wall formation. The polypeptide is D-alanine--D-alanine ligase (Jannaschia sp. (strain CCS1)).